The following is a 305-amino-acid chain: Cytochrome c biogenesis protein CcsA (305 aa).

The next 8 helical transmembrane spans lie at 11 to 31 (ANAS…KAIF), 36 to 56 (ILQL…ALLL), 75 to 95 (LMFL…YIQI), 97 to 117 (FIGF…TFFL), 142 to 162 (IMMA…AFLF), 212 to 232 (TIGI…VWAN), 239 to 259 (WSWD…AIYL), and 273 to 293 (AIVA…VNLL).

This sequence belongs to the CcmF/CycK/Ccl1/NrfE/CcsA family. May interact with Ccs1.

It is found in the plastid. The protein localises to the chloroplast thylakoid membrane. In terms of biological role, required during biogenesis of c-type cytochromes (cytochrome c6 and cytochrome f) at the step of heme attachment. The chain is Cytochrome c biogenesis protein CcsA from Mesostigma viride (Green alga).